The chain runs to 776 residues: DNA ligase (776 aa).

Residues 31-35 (DAEYD), 80-81 (SL), and glutamate 112 contribute to the NAD(+) site. Lysine 114 functions as the N6-AMP-lysine intermediate in the catalytic mechanism. Arginine 135, glutamate 172, lysine 288, and lysine 312 together coordinate NAD(+). Cysteine 406, cysteine 409, cysteine 436, and cysteine 442 together coordinate Zn(2+). Positions 693 to 776 (AEGLPLAGQT…VFLDEQGIAI (84 aa)) constitute a BRCT domain.

It belongs to the NAD-dependent DNA ligase family. LigA subfamily. The cofactor is Mg(2+). It depends on Mn(2+) as a cofactor.

The catalysed reaction is NAD(+) + (deoxyribonucleotide)n-3'-hydroxyl + 5'-phospho-(deoxyribonucleotide)m = (deoxyribonucleotide)n+m + AMP + beta-nicotinamide D-nucleotide.. DNA ligase that catalyzes the formation of phosphodiester linkages between 5'-phosphoryl and 3'-hydroxyl groups in double-stranded DNA using NAD as a coenzyme and as the energy source for the reaction. It is essential for DNA replication and repair of damaged DNA. This chain is DNA ligase, found in Pseudomonas putida (strain W619).